Here is a 369-residue protein sequence, read N- to C-terminus: MYWNKNIKLKSKKDDKIMKSPRQQEWEKIHDVYFFLTINNTQGNCFETNIIFTATLFHSVTFQLRTSKRKNIDDWKKINQFLIISFSSKINIVRSMLKCKEDDFEVMTTPPEEAEMRENPNEMKRLLTHMSTTNTPFVVHDRTGLRLSFAGLLPITTGDNGEQRIWSSSIILNSAELEYPEVKYKLRVSVKKKFDPKLSCNRNKGTIKRNDVFVLTYQLPESSIEAVRLTLIVDGNPHEIPLCKYKKADYYWLGKETNVPGPTELLRERNVSPNTASTIKNVSPGRMIDLPEGLKNFVIGENGLESICKLLHPHAVSLFRDLSEMQISQCDMKGLVESGNSMDMIVEEIVKRFHDENRQKFTTTPALLQ.

This is an uncharacterized protein from Caenorhabditis elegans.